We begin with the raw amino-acid sequence, 119 residues long: Basic phospholipase A2 notexin (119 aa).

Cystine bridges form between cysteine 11-cysteine 71, cysteine 27-cysteine 118, cysteine 29-cysteine 45, cysteine 44-cysteine 99, cysteine 51-cysteine 92, cysteine 60-cysteine 85, and cysteine 78-cysteine 90. 3 residues coordinate Ca(2+): tyrosine 28, glycine 30, and glycine 32. The active site involves histidine 48. Aspartate 49 is a binding site for Ca(2+). Aspartate 93 is an active-site residue.

The protein belongs to the phospholipase A2 family. Group I subfamily. D49 sub-subfamily. Monomer. Requires Ca(2+) as cofactor. As to expression, expressed by the venom gland.

Its subcellular location is the secreted. The enzyme catalyses a 1,2-diacyl-sn-glycero-3-phosphocholine + H2O = a 1-acyl-sn-glycero-3-phosphocholine + a fatty acid + H(+). Snake venom phospholipase A2 (PLA2) that inhibits neuromuscular transmission by blocking acetylcholine release from the nerve termini. Is directly toxic to skeletal muscle upon local application in vivo (dystrophic effect). Also has direct nephrotoxicity in experimental mice; a single subcutaneous dose (1.38 ug/kg) produces renal tubular and glomerular damage within 24 hours. PLA2 catalyzes the calcium-dependent hydrolysis of the 2-acyl groups in 3-sn-phosphoglycerides. The sequence is that of Basic phospholipase A2 notexin from Notechis scutatus scutatus (Mainland tiger snake).